The following is a 155-amino-acid chain: Mediator of RNA polymerase II transcription subunit 10 (155 aa).

Residues 54–80 form a disordered region; sequence SSHTQSHAPDADTAQANPSDPPISTIE.

The protein belongs to the Mediator complex subunit 10 family. As to quaternary structure, component of the Mediator complex.

The protein resides in the nucleus. In terms of biological role, component of the Mediator complex, a coactivator involved in the regulated transcription of nearly all RNA polymerase II-dependent genes. Mediator functions as a bridge to convey information from gene-specific regulatory proteins to the basal RNA polymerase II transcription machinery. Mediator is recruited to promoters by direct interactions with regulatory proteins and serves as a scaffold for the assembly of a functional preinitiation complex with RNA polymerase II and the general transcription factors. The sequence is that of Mediator of RNA polymerase II transcription subunit 10 (nut2) from Aspergillus terreus (strain NIH 2624 / FGSC A1156).